A 101-amino-acid polypeptide reads, in one-letter code: Ribonuclease kappa-B (101 aa).

2 helical membrane-spanning segments follow: residues 13–33 (ACGIVLSVWGVIMLSMLGIFF) and 68–88 (VGINCFIAAAIYVGVGAVSLC).

The protein belongs to the RNase K family.

It is found in the membrane. Its function is as follows. Endoribonuclease which preferentially cleaves ApU and ApG phosphodiester bonds. This is Ribonuclease kappa-B (rnasekb) from Danio rerio (Zebrafish).